The following is a 209-amino-acid chain: Small ribosomal subunit protein uS4 (209 aa).

Residues 98–164 enclose the S4 RNA-binding domain; the sequence is SRLDNVVYRG…TPFIVARETA (67 aa).

Belongs to the universal ribosomal protein uS4 family. Part of the 30S ribosomal subunit. Contacts protein S5. The interaction surface between S4 and S5 is involved in control of translational fidelity.

Its function is as follows. One of the primary rRNA binding proteins, it binds directly to 16S rRNA where it nucleates assembly of the body of the 30S subunit. Functionally, with S5 and S12 plays an important role in translational accuracy. The sequence is that of Small ribosomal subunit protein uS4 from Frankia alni (strain DSM 45986 / CECT 9034 / ACN14a).